We begin with the raw amino-acid sequence, 339 residues long: tRNA dimethylallyltransferase (339 aa).

36–43 (GPTGSGKT) provides a ligand contact to ATP. 38 to 43 (TGSGKT) contributes to the substrate binding site. The interval 61 to 64 (DSMQ) is interaction with substrate tRNA.

It belongs to the IPP transferase family. Monomer. It depends on Mg(2+) as a cofactor.

The enzyme catalyses adenosine(37) in tRNA + dimethylallyl diphosphate = N(6)-dimethylallyladenosine(37) in tRNA + diphosphate. In terms of biological role, catalyzes the transfer of a dimethylallyl group onto the adenine at position 37 in tRNAs that read codons beginning with uridine, leading to the formation of N6-(dimethylallyl)adenosine (i(6)A). The polypeptide is tRNA dimethylallyltransferase (Chlamydia trachomatis serovar A (strain ATCC VR-571B / DSM 19440 / HAR-13)).